Reading from the N-terminus, the 95-residue chain is Pyrimidine/purine nucleoside phosphorylase (95 aa).

This sequence belongs to the nucleoside phosphorylase PpnP family.

It catalyses the reaction a purine D-ribonucleoside + phosphate = a purine nucleobase + alpha-D-ribose 1-phosphate. It carries out the reaction adenosine + phosphate = alpha-D-ribose 1-phosphate + adenine. The enzyme catalyses cytidine + phosphate = cytosine + alpha-D-ribose 1-phosphate. The catalysed reaction is guanosine + phosphate = alpha-D-ribose 1-phosphate + guanine. It catalyses the reaction inosine + phosphate = alpha-D-ribose 1-phosphate + hypoxanthine. It carries out the reaction thymidine + phosphate = 2-deoxy-alpha-D-ribose 1-phosphate + thymine. The enzyme catalyses uridine + phosphate = alpha-D-ribose 1-phosphate + uracil. The catalysed reaction is xanthosine + phosphate = alpha-D-ribose 1-phosphate + xanthine. In terms of biological role, catalyzes the phosphorolysis of diverse nucleosides, yielding D-ribose 1-phosphate and the respective free bases. Can use uridine, adenosine, guanosine, cytidine, thymidine, inosine and xanthosine as substrates. Also catalyzes the reverse reactions. This is Pyrimidine/purine nucleoside phosphorylase from Vibrio cholerae serotype O1 (strain ATCC 39315 / El Tor Inaba N16961).